A 511-amino-acid polypeptide reads, in one-letter code: UDP-N-acetylmuramoyl-L-alanyl-D-glutamate--2,6-diaminopimelate ligase (511 aa).

UDP-N-acetyl-alpha-D-muramoyl-L-alanyl-D-glutamate is bound at residue S30. Residue G110 to T116 coordinates ATP. Residues T152–T153, S179, Q185, and R187 each bind UDP-N-acetyl-alpha-D-muramoyl-L-alanyl-D-glutamate. The residue at position 219 (K219) is an N6-carboxylysine. Residues R385, D409–R412, G476, and E480 contribute to the meso-2,6-diaminopimelate site. The short motif at D409 to R412 is the Meso-diaminopimelate recognition motif element.

It belongs to the MurCDEF family. MurE subfamily. Requires Mg(2+) as cofactor. In terms of processing, carboxylation is probably crucial for Mg(2+) binding and, consequently, for the gamma-phosphate positioning of ATP.

Its subcellular location is the cytoplasm. It catalyses the reaction UDP-N-acetyl-alpha-D-muramoyl-L-alanyl-D-glutamate + meso-2,6-diaminopimelate + ATP = UDP-N-acetyl-alpha-D-muramoyl-L-alanyl-gamma-D-glutamyl-meso-2,6-diaminopimelate + ADP + phosphate + H(+). Its pathway is cell wall biogenesis; peptidoglycan biosynthesis. Its function is as follows. Catalyzes the addition of meso-diaminopimelic acid to the nucleotide precursor UDP-N-acetylmuramoyl-L-alanyl-D-glutamate (UMAG) in the biosynthesis of bacterial cell-wall peptidoglycan. The polypeptide is UDP-N-acetylmuramoyl-L-alanyl-D-glutamate--2,6-diaminopimelate ligase (Geobacter metallireducens (strain ATCC 53774 / DSM 7210 / GS-15)).